A 563-amino-acid chain; its full sequence is Arginine--tRNA ligase (563 aa).

The 'HIGH' region motif lies at 121–131 (PNIAKPFSIGH).

It belongs to the class-I aminoacyl-tRNA synthetase family. Monomer.

It is found in the cytoplasm. The enzyme catalyses tRNA(Arg) + L-arginine + ATP = L-arginyl-tRNA(Arg) + AMP + diphosphate. The chain is Arginine--tRNA ligase from Streptococcus pyogenes serotype M2 (strain MGAS10270).